We begin with the raw amino-acid sequence, 1409 residues long: DNA-directed RNA polymerase subunit beta' (1409 aa).

Zn(2+) is bound by residues cysteine 70, cysteine 72, cysteine 85, and cysteine 88. Residues aspartate 461, aspartate 463, and aspartate 465 each coordinate Mg(2+). Cysteine 820, cysteine 894, cysteine 901, and cysteine 904 together coordinate Zn(2+).

The protein belongs to the RNA polymerase beta' chain family. As to quaternary structure, the RNAP catalytic core consists of 2 alpha, 1 beta, 1 beta' and 1 omega subunit. When a sigma factor is associated with the core the holoenzyme is formed, which can initiate transcription. Requires Mg(2+) as cofactor. The cofactor is Zn(2+).

It catalyses the reaction RNA(n) + a ribonucleoside 5'-triphosphate = RNA(n+1) + diphosphate. Its function is as follows. DNA-dependent RNA polymerase catalyzes the transcription of DNA into RNA using the four ribonucleoside triphosphates as substrates. This chain is DNA-directed RNA polymerase subunit beta', found in Ralstonia nicotianae (strain ATCC BAA-1114 / GMI1000) (Ralstonia solanacearum).